Consider the following 389-residue polypeptide: S-adenosylmethionine synthase (389 aa).

His17 provides a ligand contact to ATP. Asp19 contacts Mg(2+). K(+) is bound at residue Glu45. Positions 58 and 101 each coordinate L-methionine. The segment at 101-111 (QSPDIAQGVNP) is flexible loop. ATP is bound by residues 168–170 (DGK), 234–235 (RF), Asp243, 249–250 (RK), and Lys270. Asp243 is a binding site for L-methionine. Lys274 contributes to the L-methionine binding site.

The protein belongs to the AdoMet synthase family. In terms of assembly, homotetramer; dimer of dimers. Requires Mg(2+) as cofactor. The cofactor is K(+).

Its subcellular location is the cytoplasm. It catalyses the reaction L-methionine + ATP + H2O = S-adenosyl-L-methionine + phosphate + diphosphate. Its pathway is amino-acid biosynthesis; S-adenosyl-L-methionine biosynthesis; S-adenosyl-L-methionine from L-methionine: step 1/1. Catalyzes the formation of S-adenosylmethionine (AdoMet) from methionine and ATP. The overall synthetic reaction is composed of two sequential steps, AdoMet formation and the subsequent tripolyphosphate hydrolysis which occurs prior to release of AdoMet from the enzyme. The sequence is that of S-adenosylmethionine synthase from Syntrophobacter fumaroxidans (strain DSM 10017 / MPOB).